The chain runs to 249 residues: uncharacterized protein (249 aa).

11-34 (IFGGRSQIGGELARRLAAGATMVL) contributes to the NADP(+) binding site. Serine 142 contributes to the substrate binding site. Residue tyrosine 155 is the Proton acceptor of the active site.

This sequence belongs to the short-chain dehydrogenases/reductases (SDR) family.

This is an uncharacterized protein from Mycobacterium tuberculosis (strain ATCC 25618 / H37Rv).